A 253-amino-acid polypeptide reads, in one-letter code: 5'-nucleotidase SurE (253 aa).

The a divalent metal cation site is built by Asp-8, Asp-9, Ser-39, and Asn-92.

The protein belongs to the SurE nucleotidase family. The cofactor is a divalent metal cation.

The protein localises to the cytoplasm. The catalysed reaction is a ribonucleoside 5'-phosphate + H2O = a ribonucleoside + phosphate. Functionally, nucleotidase that shows phosphatase activity on nucleoside 5'-monophosphates. The sequence is that of 5'-nucleotidase SurE from Burkholderia pseudomallei (strain 668).